Reading from the N-terminus, the 292-residue chain is Protease HtpX homolog (292 aa).

2 consecutive transmembrane segments (helical) span residues 4–24 and 39–59; these read ILLFVLTNLAVVLVLGVVASL and GALLGFALVMGFGGAFISLLI. His144 lines the Zn(2+) pocket. Glu145 is a catalytic residue. Zn(2+) is bound at residue His148. Helical transmembrane passes span 159-179 and 199-219; these read LIQGVMNTFVVFLSRVIGYAV and VTTIVLDIALGFVAAIIVAWF. Residue Glu224 coordinates Zn(2+).

Belongs to the peptidase M48B family. The cofactor is Zn(2+).

The protein resides in the cell inner membrane. The protein is Protease HtpX homolog of Verminephrobacter eiseniae (strain EF01-2).